The primary structure comprises 392 residues: Phosphoglycerate kinase (392 aa).

Residues 21 to 23, R36, 59 to 62, R118, and R151 each bind substrate; these read DFN and HLGR. ATP-binding positions include K201, G292, E323, and 349 to 352; that span reads GGDS.

The protein belongs to the phosphoglycerate kinase family. As to quaternary structure, monomer.

It is found in the cytoplasm. It carries out the reaction (2R)-3-phosphoglycerate + ATP = (2R)-3-phospho-glyceroyl phosphate + ADP. It functions in the pathway carbohydrate degradation; glycolysis; pyruvate from D-glyceraldehyde 3-phosphate: step 2/5. The chain is Phosphoglycerate kinase from Borrelia hermsii (strain HS1 / DAH).